The primary structure comprises 40 residues: Accessory gland-specific peptide 57Db (40 aa).

Residues 1–17 form the signal peptide; that stretch reads MKITSALVLLFAGVAFA.

Lumen fluid of male accessory glands, becomes seminal fluid.

The protein resides in the secreted. Functionally, transferred from male to female during mating and may affect egglaying and behavior after mating. The sequence is that of Accessory gland-specific peptide 57Db (Mst57Db) from Drosophila melanogaster (Fruit fly).